A 272-amino-acid polypeptide reads, in one-letter code: MIGLVYSVEDPAGRGIASYIVEALKPHRTTNPYAMEYYEGDGFVLAGFNEDVIYFDFLEERLPMVSEYIVLSRHSSKAGVKSYTVHHTGNYGGEALSGGRPGELGIASPRTAWLLLRLLKTYRDAYSRNEYEVSYEATHHGPTSLSKPLVFIEIGSGLDEWRNRVNHAVVGDTVIGFLRGGIRDECIPVIGIGGGHYPRKHTELALAEPVCYGHIMAKYALEYMSRVVLDKMTERSVVKPVEVIVEKKGTRQEHRSLLEEYVSEKKLSLRYI.

This sequence belongs to the DtdA deacylase family. As to quaternary structure, monomer. The cofactor is Zn(2+).

The catalysed reaction is a D-aminoacyl-tRNA + H2O = a tRNA + a D-alpha-amino acid + H(+). It carries out the reaction glycyl-tRNA(Ala) + H2O = tRNA(Ala) + glycine + H(+). Its function is as follows. D-aminoacyl-tRNA deacylase with broad substrate specificity. By recycling D-aminoacyl-tRNA to D-amino acids and free tRNA molecules, this enzyme counteracts the toxicity associated with the formation of D-aminoacyl-tRNA entities in vivo. The sequence is that of D-aminoacyl-tRNA deacylase from Desulfurococcus amylolyticus (strain DSM 18924 / JCM 16383 / VKM B-2413 / 1221n) (Desulfurococcus kamchatkensis).